A 291-amino-acid chain; its full sequence is D-alanyl-D-alanine carboxypeptidase (291 aa).

The N-terminal stretch at 1–29 (MRLRRAAATVITTGALLAAGTLGATPATA) is a signal peptide. The active-site Acyl-ester intermediate is the Ser-64. The active-site Proton acceptor is the Lys-67. Ser-125 is an active-site residue. Substrate is bound at residue Lys-242.

This sequence belongs to the peptidase S11 family.

It localises to the secreted. It carries out the reaction Preferential cleavage: (Ac)2-L-Lys-D-Ala-|-D-Ala. Also transpeptidation of peptidyl-alanyl moieties that are N-acyl substituents of D-alanine.. It participates in cell wall biogenesis; peptidoglycan biosynthesis. Functionally, removes C-terminal D-alanyl residues from sugar-peptide cell wall precursors. The polypeptide is D-alanyl-D-alanine carboxypeptidase (Streptomyces sp. (strain K15)).